Reading from the N-terminus, the 212-residue chain is MQILLAALVAYLIGSVSFAVVVSGAMGLADPRSYGSKNPGATNVLRSGNKKAAILTLVGDAFKGWIAVWLARHLGLPDVAVAWVAIAVFLGHLYPVFFRFQGGKGVATAAGVLLAVHPVLGLATALTWLIVAFFFRYSSLAALVAAVFAPVFDVFLFGTGHNPVAWAVLAMSVLLVWRHRGNISKLLAGQESRIGDKKKAAADGGAQDGGKA.

Transmembrane regions (helical) follow at residues 3-23 (ILLA…VVVS), 78-98 (DVAV…PVFF), 115-135 (AVHP…AFFF), and 155-177 (FLFG…LLVW).

Belongs to the PlsY family. Probably interacts with PlsX.

It is found in the cell inner membrane. It catalyses the reaction an acyl phosphate + sn-glycerol 3-phosphate = a 1-acyl-sn-glycero-3-phosphate + phosphate. It participates in lipid metabolism; phospholipid metabolism. In terms of biological role, catalyzes the transfer of an acyl group from acyl-phosphate (acyl-PO(4)) to glycerol-3-phosphate (G3P) to form lysophosphatidic acid (LPA). This enzyme utilizes acyl-phosphate as fatty acyl donor, but not acyl-CoA or acyl-ACP. In Burkholderia lata (strain ATCC 17760 / DSM 23089 / LMG 22485 / NCIMB 9086 / R18194 / 383), this protein is Glycerol-3-phosphate acyltransferase.